We begin with the raw amino-acid sequence, 371 residues long: uncharacterized protein (371 aa).

Belongs to the Gfo/Idh/MocA family.

This is an uncharacterized protein from Synechocystis sp. (strain ATCC 27184 / PCC 6803 / Kazusa).